The sequence spans 69 residues: Iota-conotoxin LtIIIA (69 aa).

The N-terminal stretch at 1 to 20 (MLKMGVLLFTFLVLFPLTTL) is a signal peptide. Positions 21–52 (ELDTDRPVERHAAIKQDLKPQERRGIRLHAPR) are excised as a propeptide. 4-carboxyglutamate is present on residues glutamate 54 and glutamate 57. Cystine bridges form between cysteine 55/cysteine 67, cysteine 56/cysteine 65, and cysteine 61/cysteine 68. Proline 58 carries the post-translational modification 4-hydroxyproline.

As to expression, expressed by the venom duct.

It localises to the secreted. Its function is as follows. Iota-conotoxins bind to voltage-gated sodium channels and act as agonists by shifting the voltage-dependence of activation to more hyperpolarized levels. This toxin enhances tetrodotoxin-sensitive sodium current in rat dorsal root ganglion neurons. This Conus litteratus (Lettered cone) protein is Iota-conotoxin LtIIIA.